Reading from the N-terminus, the 521-residue chain is Sphingolipid C9-methyltransferase 2 (521 aa).

2 helical membrane-spanning segments follow: residues 60-80 (VLIS…GGGF) and 85-105 (FFAI…ISAI). Residues 225–226 (YT), 262–270 (MLDIGCGWG), 288–293 (TLGRNQ), and 318–319 (YR) each bind S-adenosyl-L-methionine.

It belongs to the CFA/CMAS family.

Its subcellular location is the membrane. The enzyme catalyses a (4E,8E)-4-sphinga-4,8-dienine ceramide + S-adenosyl-L-methionine = a 9-methyl-(4E,8E)-sphinga-4,8-dienine ceramide + S-adenosyl-L-homocysteine + H(+). It participates in lipid metabolism; sphingolipid metabolism. Functionally, catalyzes methylation of the sphingoid base component of glucosylceramides (GluCers) at the C9-position. Sphingolipid C9-methylation requires 4,8-desaturated ceramides as substrates. Glucosylceramides play important roles in growth, differentiation and pathogenicity. The methyl group at the C9-position distinguishes fungal glucosylceramides from those of plants and animals and may thus play a role in host-pathogen interactions enabling the host to recognize the fungal attack and initiate specific defense responses. However, C-9 methylation of GlcCers is not essential for the sensitivity of F.graminearum to plant defensins MsDef1 and RsAFP2. This chain is Sphingolipid C9-methyltransferase 2, found in Gibberella zeae (strain ATCC MYA-4620 / CBS 123657 / FGSC 9075 / NRRL 31084 / PH-1) (Wheat head blight fungus).